The following is a 275-amino-acid chain: Formamidopyrimidine-DNA glycosylase (275 aa).

The active-site Schiff-base intermediate with DNA is the P2. E3 acts as the Proton donor in catalysis. K58 acts as the Proton donor; for beta-elimination activity in catalysis. DNA contacts are provided by H93, R111, and R156. The FPG-type zinc finger occupies 241 to 275 (FVYDRAGLPCRVCGTPIRQIVQGQRSTYFCPTCQR). R265 serves as the catalytic Proton donor; for delta-elimination activity.

The protein belongs to the FPG family. In terms of assembly, monomer. It depends on Zn(2+) as a cofactor.

The enzyme catalyses Hydrolysis of DNA containing ring-opened 7-methylguanine residues, releasing 2,6-diamino-4-hydroxy-5-(N-methyl)formamidopyrimidine.. It catalyses the reaction 2'-deoxyribonucleotide-(2'-deoxyribose 5'-phosphate)-2'-deoxyribonucleotide-DNA = a 3'-end 2'-deoxyribonucleotide-(2,3-dehydro-2,3-deoxyribose 5'-phosphate)-DNA + a 5'-end 5'-phospho-2'-deoxyribonucleoside-DNA + H(+). In terms of biological role, involved in base excision repair of DNA damaged by oxidation or by mutagenic agents. Acts as a DNA glycosylase that recognizes and removes damaged bases. Has a preference for oxidized purines, such as 7,8-dihydro-8-oxoguanine (8-oxoG). Has AP (apurinic/apyrimidinic) lyase activity and introduces nicks in the DNA strand. Cleaves the DNA backbone by beta-delta elimination to generate a single-strand break at the site of the removed base with both 3'- and 5'-phosphates. The protein is Formamidopyrimidine-DNA glycosylase of Burkholderia ambifaria (strain MC40-6).